A 541-amino-acid chain; its full sequence is Coiled-coil domain-containing protein 116 (541 aa).

Residues 79-102 (QVLDSLQTVVEQATERLAAMKTEA) are a coiled coil. Positions 346-397 (LPGNSDLLQPSSKASIPTNREARGEPCDSLTTAYSPKTSHRKSKGRRGSPPN) are disordered. Residues 351–363 (DLLQPSSKASIPT) are compositionally biased toward polar residues. Positions 383–392 (TSHRKSKGRR) are enriched in basic residues. Ser394 is subject to Phosphoserine.

It localises to the cytoplasm. The protein localises to the cytoskeleton. Its subcellular location is the microtubule organizing center. It is found in the centrosome. This is Coiled-coil domain-containing protein 116 (Ccdc116) from Mus musculus (Mouse).